Here is a 212-residue protein sequence, read N- to C-terminus: ATP-dependent Clp protease proteolytic subunit (212 aa).

Residue Ser114 is the Nucleophile of the active site. The active site involves His139.

Belongs to the peptidase S14 family. As to quaternary structure, fourteen ClpP subunits assemble into 2 heptameric rings which stack back to back to give a disk-like structure with a central cavity, resembling the structure of eukaryotic proteasomes.

The protein resides in the cytoplasm. The catalysed reaction is Hydrolysis of proteins to small peptides in the presence of ATP and magnesium. alpha-casein is the usual test substrate. In the absence of ATP, only oligopeptides shorter than five residues are hydrolyzed (such as succinyl-Leu-Tyr-|-NHMec, and Leu-Tyr-Leu-|-Tyr-Trp, in which cleavage of the -Tyr-|-Leu- and -Tyr-|-Trp bonds also occurs).. Functionally, cleaves peptides in various proteins in a process that requires ATP hydrolysis. Has a chymotrypsin-like activity. Plays a major role in the degradation of misfolded proteins. The chain is ATP-dependent Clp protease proteolytic subunit from Laribacter hongkongensis (strain HLHK9).